The sequence spans 69 residues: Putative transmembrane protein ORF34 (69 aa).

The next 2 membrane-spanning stretches (helical) occupy residues Leu-7 to Phe-27 and Val-42 to Phe-62.

The protein resides in the host membrane. The polypeptide is Putative transmembrane protein ORF34 (Haloarcula hispanica (His1V)).